Consider the following 207-residue polypeptide: MKLRGLYAITDSQLLAGRFLTHVEAALEGGVRLLQYRDKSDDAARRLREAQALQKLCERYGTELVINDDAELAARLGVGVHLGQTDGPLTPARALLGRQAIIGSTCHASLDLAAQAASEGASYVAFGRFFNSVTKPGAPAADVGLLAQARGQVKLPIAVIGGITLDNAAPLVAHGADLLAVIHGLFGADSAQEVTRRARAFNALFAS.

4-amino-2-methyl-5-(diphosphooxymethyl)pyrimidine contacts are provided by residues Q35–K39 and N67. Mg(2+) is bound by residues D68 and D86. T105 contributes to the 4-amino-2-methyl-5-(diphosphooxymethyl)pyrimidine binding site. Residue S132 to T134 coordinates 2-[(2R,5Z)-2-carboxy-4-methylthiazol-5(2H)-ylidene]ethyl phosphate. Residue K135 participates in 4-amino-2-methyl-5-(diphosphooxymethyl)pyrimidine binding. G162 provides a ligand contact to 2-[(2R,5Z)-2-carboxy-4-methylthiazol-5(2H)-ylidene]ethyl phosphate.

Belongs to the thiamine-phosphate synthase family. It depends on Mg(2+) as a cofactor.

The enzyme catalyses 2-[(2R,5Z)-2-carboxy-4-methylthiazol-5(2H)-ylidene]ethyl phosphate + 4-amino-2-methyl-5-(diphosphooxymethyl)pyrimidine + 2 H(+) = thiamine phosphate + CO2 + diphosphate. It carries out the reaction 2-(2-carboxy-4-methylthiazol-5-yl)ethyl phosphate + 4-amino-2-methyl-5-(diphosphooxymethyl)pyrimidine + 2 H(+) = thiamine phosphate + CO2 + diphosphate. It catalyses the reaction 4-methyl-5-(2-phosphooxyethyl)-thiazole + 4-amino-2-methyl-5-(diphosphooxymethyl)pyrimidine + H(+) = thiamine phosphate + diphosphate. It participates in cofactor biosynthesis; thiamine diphosphate biosynthesis; thiamine phosphate from 4-amino-2-methyl-5-diphosphomethylpyrimidine and 4-methyl-5-(2-phosphoethyl)-thiazole: step 1/1. Functionally, condenses 4-methyl-5-(beta-hydroxyethyl)thiazole monophosphate (THZ-P) and 2-methyl-4-amino-5-hydroxymethyl pyrimidine pyrophosphate (HMP-PP) to form thiamine monophosphate (TMP). In Pseudomonas putida (strain W619), this protein is Thiamine-phosphate synthase.